The chain runs to 301 residues: Large ribosomal subunit protein uL18 (301 aa).

The protein belongs to the universal ribosomal protein uL18 family. In terms of assembly, component of the large ribosomal subunit (LSU). Mature N.crassa ribosomes consist of a small (40S) and a large (60S) subunit. The 40S small subunit contains 1 molecule of ribosomal RNA (18S rRNA) and at least 32 different proteins. The large 60S subunit contains 3 rRNA molecules (26S, 5.8S and 5S rRNA) and at least 42 different proteins.

It is found in the cytoplasm. Component of the ribosome, a large ribonucleoprotein complex responsible for the synthesis of proteins in the cell. The small ribosomal subunit (SSU) binds messenger RNAs (mRNAs) and translates the encoded message by selecting cognate aminoacyl-transfer RNA (tRNA) molecules. The large subunit (LSU) contains the ribosomal catalytic site termed the peptidyl transferase center (PTC), which catalyzes the formation of peptide bonds, thereby polymerizing the amino acids delivered by tRNAs into a polypeptide chain. The nascent polypeptides leave the ribosome through a tunnel in the LSU and interact with protein factors that function in enzymatic processing, targeting, and the membrane insertion of nascent chains at the exit of the ribosomal tunnel. The polypeptide is Large ribosomal subunit protein uL18 (rpl-5) (Neurospora crassa (strain ATCC 24698 / 74-OR23-1A / CBS 708.71 / DSM 1257 / FGSC 987)).